A 325-amino-acid chain; its full sequence is Heat-inducible transcription repressor HrcA (325 aa).

The protein belongs to the HrcA family.

Negative regulator of class I heat shock genes (grpE-dnaK-dnaJ and groELS operons). Prevents heat-shock induction of these operons. The chain is Heat-inducible transcription repressor HrcA from Staphylococcus aureus (strain USA300).